Here is a 313-residue protein sequence, read N- to C-terminus: Protease HtpX homolog (313 aa).

Transmembrane regions (helical) follow at residues 7 to 24 (AMLLAFMTALFMAVGYLI) and 29 to 46 (GMMIALVIAAAMNLFSYW). Residue histidine 130 coordinates Zn(2+). The active site involves glutamate 131. Histidine 134 is a binding site for Zn(2+). A run of 2 helical transmembrane segments spans residues 145–165 (ITATLAGAISMLGNFAFFFGG) and 172–192 (PFGFIGILVAMIVAPLAAMVV). Zn(2+) is bound at residue glutamate 201. Positions 282 to 313 (GNAPPASLREDEPGADGPWGRSASRARKGPWS) are disordered.

Belongs to the peptidase M48B family. The cofactor is Zn(2+).

It localises to the cell inner membrane. The protein is Protease HtpX homolog of Chelativorans sp. (strain BNC1).